We begin with the raw amino-acid sequence, 598 residues long: Probable ATP-dependent RNA helicase DDX52 (598 aa).

An N6-acetyllysine modification is found at K15. A Phosphoserine modification is found at S39. Residues 166–194 (QLDQEYKINSRLLQNILDAGFQVPTPIQM) carry the Q motif motif. The Helicase ATP-binding domain occupies 197–375 (IPVMLHGREL…KLNLDNVVSV (179 aa)). 210 to 217 (APTGSGKT) contacts ATP. The DEAD box motif lies at 319–322 (DESD). The 162-residue stretch at 386–547 (TVEQELLFVG…PVPEYIKGFQ (162 aa)) folds into the Helicase C-terminal domain.

This sequence belongs to the DEAD box helicase family. DDX52/ROK1 subfamily.

It is found in the nucleus. It localises to the nucleolus. It catalyses the reaction ATP + H2O = ADP + phosphate + H(+). Functionally, required for efficient ribosome biogenesis. May control cell cycle progression by regulating translation of mRNAs that contain a terminal oligo pyrimidine (TOP) motif in their 5' UTRs, such as GTPBP4. This chain is Probable ATP-dependent RNA helicase DDX52 (Ddx52), found in Mus musculus (Mouse).